Consider the following 367-residue polypeptide: tRNA-specific 2-thiouridylase MnmA (367 aa).

ATP is bound by residues 13–20 (GLSGGVDS) and Met39. The interaction with target base in tRNA stretch occupies residues 99–101 (NPD). Cys104 functions as the Nucleophile in the catalytic mechanism. A disulfide bridge connects residues Cys104 and Cys200. An ATP-binding site is contributed by Gly128. The interaction with tRNA stretch occupies residues 150-152 (KDQ). The active-site Cysteine persulfide intermediate is the Cys200. Residues 307-308 (RY) form an interaction with tRNA region.

The protein belongs to the MnmA/TRMU family.

The protein resides in the cytoplasm. The catalysed reaction is S-sulfanyl-L-cysteinyl-[protein] + uridine(34) in tRNA + AH2 + ATP = 2-thiouridine(34) in tRNA + L-cysteinyl-[protein] + A + AMP + diphosphate + H(+). Functionally, catalyzes the 2-thiolation of uridine at the wobble position (U34) of tRNA, leading to the formation of s(2)U34. In Neisseria meningitidis serogroup C / serotype 2a (strain ATCC 700532 / DSM 15464 / FAM18), this protein is tRNA-specific 2-thiouridylase MnmA.